Reading from the N-terminus, the 228-residue chain is Protein boule (228 aa).

The 78-residue stretch at 33–110 (NRIFVGGISG…RKLNIAPAIK (78 aa)) folds into the RRM domain. Residues 151-178 (PAAGVPAIYPPSAMQYQPFYQYYSVPMN) form the DAZ domain. A compositionally biased stretch (low complexity) spans 193–214 (PLLHSPTSNPHSPHSQSHPQSP). The tract at residues 193–228 (PLLHSPTSNPHSPHSQSHPQSPCWSIEDLRDTLPRV) is disordered. Positions 219–228 (EDLRDTLPRV) are enriched in basic and acidic residues.

It belongs to the RRM DAZ family. As to quaternary structure, interacts with the translational regulator orb2. In terms of tissue distribution, testis specific.

It localises to the nucleus. The protein resides in the cytoplasm. Functionally, RNA-binding protein that plays a central role in spermatogenesis. Required for meiotic entry and germline differentiation, at the transition between G2 and M phases of meiosis I. Acts by regulating translation of specific mRNAs, possibly by binding to their 3'-UTR. Essential for translation of twine (twe) mRNA. Required for the expression of various genes such as CG6784, CG17210, CG15841 scpr-B, scpr-C, and rho-6. The polypeptide is Protein boule (bol) (Drosophila melanogaster (Fruit fly)).